We begin with the raw amino-acid sequence, 469 residues long: Calcium-binding mitochondrial carrier protein SCaMC-2 (469 aa).

Over 1-189 the chain is Mitochondrial intermembrane; sequence MLCLCLYVPL…ERQTGMWWRH (189 aa). EF-hand domains follow at residues 47 to 80, 78 to 113, and 114 to 149; these read TYRQ…QDHE, DHEK…LGVK, and ISEQ…HPVE. The Ca(2+) site is built by aspartate 60, aspartate 62, aspartate 64, glutamine 66, and glutamate 71. Solcar repeat units follow at residues 184 to 270, 278 to 363, and 375 to 463; these read GMWW…IKRL, LRIH…LKNA, and PGVF…LKIT. A helical membrane pass occupies residues 190–207; it reads LVAGGGAGAVSRTCTAPL. The Mitochondrial matrix portion of the chain corresponds to 208–244; sequence DRLKVLMQVHASRSNNMCIVGGFTQMIREGGARSLWR. The helical transmembrane segment at 245 to 264 threads the bilayer; it reads GNGINVLKIAPESAIKFMAY. The Mitochondrial intermembrane segment spans residues 265–287; that stretch reads EQIKRLIGSDQETLRIHERLVAG. Residues 288–301 traverse the membrane as a helical segment; sequence SLAGAIAQSSIYPM. At 302–337 the chain is on the mitochondrial matrix side; that stretch reads EVLKTRMALRKTGQYSGMLDCARKILAREGMAAFYK. The chain crosses the membrane as a helical span at residues 338 to 357; it reads GYVPNMLGIIPYAGIDLAVY. Topologically, residues 358–380 are mitochondrial intermembrane; it reads ETLKNAWLQRYAVNSADPGVFVL. A helical transmembrane segment spans residues 381 to 398; the sequence is LACGTMSSTCGQLASYPL. The Mitochondrial matrix segment spans residues 399–437; sequence ALVRTRMQAQASMEGAPEVTMSSLFKQILRTEGAFGLYR. The chain crosses the membrane as a helical span at residues 438–457; the sequence is GLAPNFMKVIPAVSISYVVY. Over 458–469 the chain is Mitochondrial intermembrane; that stretch reads ENLKITLGVQSR.

This sequence belongs to the mitochondrial carrier (TC 2.A.29) family.

The protein resides in the mitochondrion inner membrane. Calcium-dependent mitochondrial solute carrier. Mitochondrial solute carriers shuttle metabolites, nucleotides, and cofactors through the mitochondrial inner membrane. May act as a ATP-Mg/Pi exchanger that mediates the transport of Mg-ATP in exchange for phosphate, catalyzing the net uptake or efflux of adenine nucleotides into or from the mitochondria. The protein is Calcium-binding mitochondrial carrier protein SCaMC-2 (SLC25A25) of Bos taurus (Bovine).